Consider the following 438-residue polypeptide: Serine hydroxymethyltransferase 1 (438 aa).

(6S)-5,6,7,8-tetrahydrofolate is bound by residues leucine 130 and 134–136 (GHL). The residue at position 239 (lysine 239) is an N6-(pyridoxal phosphate)lysine.

The protein belongs to the SHMT family. Homodimer. Pyridoxal 5'-phosphate is required as a cofactor.

It localises to the cytoplasm. The enzyme catalyses (6R)-5,10-methylene-5,6,7,8-tetrahydrofolate + glycine + H2O = (6S)-5,6,7,8-tetrahydrofolate + L-serine. It functions in the pathway one-carbon metabolism; tetrahydrofolate interconversion. The protein operates within amino-acid biosynthesis; glycine biosynthesis; glycine from L-serine: step 1/1. Its function is as follows. Catalyzes the reversible interconversion of serine and glycine with tetrahydrofolate (THF) serving as the one-carbon carrier. This reaction serves as the major source of one-carbon groups required for the biosynthesis of purines, thymidylate, methionine, and other important biomolecules. Also exhibits THF-independent aldolase activity toward beta-hydroxyamino acids, producing glycine and aldehydes, via a retro-aldol mechanism. This chain is Serine hydroxymethyltransferase 1, found in Mycobacterium tuberculosis (strain CDC 1551 / Oshkosh).